The sequence spans 348 residues: Ferredoxin--NADP reductase 1 (348 aa).

Residues D33, K41, Y45, V85, L120, D287, and S328 each coordinate FAD.

The protein belongs to the ferredoxin--NADP reductase type 2 family. As to quaternary structure, homodimer. It depends on FAD as a cofactor.

The catalysed reaction is 2 reduced [2Fe-2S]-[ferredoxin] + NADP(+) + H(+) = 2 oxidized [2Fe-2S]-[ferredoxin] + NADPH. The polypeptide is Ferredoxin--NADP reductase 1 (Oceanobacillus iheyensis (strain DSM 14371 / CIP 107618 / JCM 11309 / KCTC 3954 / HTE831)).